Consider the following 344-residue polypeptide: Unsaturated rhamnogalacturonyl hydrolase YesR (344 aa).

Substrate is bound by residues 30–31 (DW), N74, and 118–128 (QHTVNAAEYVF). D135 functions as the Proton donor in the catalytic mechanism. Substrate-binding positions include 198–202 (RANGW) and 308–309 (NA).

It belongs to the glycosyl hydrolase 105 family. Monomer.

Its subcellular location is the cytoplasm. The enzyme catalyses 2-O-(4-deoxy-beta-L-threo-hex-4-enopyranuronosyl)-alpha-L-rhamnose + H2O = 5-dehydro-4-deoxy-D-glucuronate + L-rhamnopyranose. Functionally, catalyzes the hydrolysis of unsaturated rhamnogalacturonan disaccharide to yield unsaturated D-galacturonic acid and L-rhamnose. It cannot act on unsaturated glucuronyl hydrolase (UGL) substrates containing unsaturated D-glucuronic acid at the non-reducing terminus, although the active pockets of YesR and UGL are very similar. The protein is Unsaturated rhamnogalacturonyl hydrolase YesR (yesR) of Bacillus subtilis (strain 168).